The sequence spans 338 residues: Ketol-acid reductoisomerase (NADP(+)) (338 aa).

In terms of domain architecture, KARI N-terminal Rossmann spans 1 to 181 (MKVFYDKDCD…GGGKAGIIET (181 aa)). Residues 24–27 (YGSQ), R47, and S52 contribute to the NADP(+) site. Residue H107 is part of the active site. G133 is a binding site for NADP(+). The region spanning 182–327 (NFKEETETDL…AQLRAMMPWI (146 aa)) is the KARI C-terminal knotted domain. Mg(2+) contacts are provided by D190, E194, E226, and E230. Substrate is bound at residue S251.

It belongs to the ketol-acid reductoisomerase family. Mg(2+) is required as a cofactor.

It catalyses the reaction (2R)-2,3-dihydroxy-3-methylbutanoate + NADP(+) = (2S)-2-acetolactate + NADPH + H(+). It carries out the reaction (2R,3R)-2,3-dihydroxy-3-methylpentanoate + NADP(+) = (S)-2-ethyl-2-hydroxy-3-oxobutanoate + NADPH + H(+). It functions in the pathway amino-acid biosynthesis; L-isoleucine biosynthesis; L-isoleucine from 2-oxobutanoate: step 2/4. Its pathway is amino-acid biosynthesis; L-valine biosynthesis; L-valine from pyruvate: step 2/4. Involved in the biosynthesis of branched-chain amino acids (BCAA). Catalyzes an alkyl-migration followed by a ketol-acid reduction of (S)-2-acetolactate (S2AL) to yield (R)-2,3-dihydroxy-isovalerate. In the isomerase reaction, S2AL is rearranged via a Mg-dependent methyl migration to produce 3-hydroxy-3-methyl-2-ketobutyrate (HMKB). In the reductase reaction, this 2-ketoacid undergoes a metal-dependent reduction by NADPH to yield (R)-2,3-dihydroxy-isovalerate. This Acidovorax ebreus (strain TPSY) (Diaphorobacter sp. (strain TPSY)) protein is Ketol-acid reductoisomerase (NADP(+)).